The sequence spans 622 residues: Polypeptide N-acetylgalactosaminyltransferase 6 (622 aa).

The Cytoplasmic portion of the chain corresponds to 1–8 (MRLLRRRH). The chain crosses the membrane as a helical; Signal-anchor for type II membrane protein span at residues 9 to 28 (MAVRLVMVGSAFVLFLFILQ). Topologically, residues 29 to 622 (RDVSGREQAT…SDPHQHWLFI (594 aa)) are lumenal. N86 carries N-linked (GlcNAc...) asparagine glycosylation. Residues 103–135 (WERPPQDPNGPGADGKAFQKKEWTPQETQEKEE) are disordered. Positions 119-135 (AFQKKEWTPQETQEKEE) are enriched in basic and acidic residues. Residues 176 to 285 (LPATSVIIVF…HGWLEPLLAR (110 aa)) are catalytic subdomain A. Mn(2+)-binding residues include D269, H271, and H407. The catalytic subdomain B stretch occupies residues 348–410 (PIKSPTFAGG…PCSVVGHVFR (63 aa)). N476 carries an N-linked (GlcNAc...) asparagine glycan. In terms of domain architecture, Ricin B-type lectin spans 507-622 (DHCLDVGENN…SDPHQHWLFI (116 aa)). Cysteines 509 and 527 form a disulfide. The UDP-N-acetyl-alpha-D-galactosamine site is built by D511, E514, H528, and N533. Disulfide bonds link C553–C566 and C597–C610.

This sequence belongs to the glycosyltransferase 2 family. GalNAc-T subfamily. The cofactor is Mn(2+).

Its subcellular location is the golgi apparatus membrane. It catalyses the reaction L-seryl-[protein] + UDP-N-acetyl-alpha-D-galactosamine = a 3-O-[N-acetyl-alpha-D-galactosaminyl]-L-seryl-[protein] + UDP + H(+). The catalysed reaction is L-threonyl-[protein] + UDP-N-acetyl-alpha-D-galactosamine = a 3-O-[N-acetyl-alpha-D-galactosaminyl]-L-threonyl-[protein] + UDP + H(+). It participates in protein modification; protein glycosylation. Functionally, catalyzes the initial reaction in O-linked oligosaccharide biosynthesis, the transfer of an N-acetyl-D-galactosamine residue to a serine or threonine residue on the protein receptor. May participate in synthesis of oncofetal fibronectin. Has activity toward MUC1A, MUC2, EA2 and fibronectin peptides. In Bos taurus (Bovine), this protein is Polypeptide N-acetylgalactosaminyltransferase 6 (GALNT6).